Consider the following 1789-residue polypeptide: Protein TIC 214 (1789 aa).

The next 6 helical transmembrane spans lie at 19–39 (IINS…FSIG), 68–88 (FIAG…HLAL), 91–111 (PHTI…WNNH), 133–153 (VFLN…SSML), 176–196 (VGWL…LVWI), and 227–247 (IFSI…PSPI).

This sequence belongs to the TIC214 family. As to quaternary structure, part of the Tic complex.

The protein resides in the plastid. The protein localises to the chloroplast inner membrane. In terms of biological role, involved in protein precursor import into chloroplasts. May be part of an intermediate translocation complex acting as a protein-conducting channel at the inner envelope. This chain is Protein TIC 214, found in Capsella bursa-pastoris (Shepherd's purse).